The sequence spans 119 residues: MSQIDKASRRQKIKDRSRVKVHGTMAKPRLCVYRSLSQIYAQLIDDDNGKTIMAVSSMSKENKALEGTKSEVCTVVGKQLAEMALAKGITTVVFDRNGFRYHGRLKALAEGAREAGLVF.

The tract at residues Met-1 to Lys-20 is disordered. Over residues Arg-9–Lys-20 the composition is skewed to basic residues.

This sequence belongs to the universal ribosomal protein uL18 family. In terms of assembly, part of the 50S ribosomal subunit; part of the 5S rRNA/L5/L18/L25 subcomplex. Contacts the 5S and 23S rRNAs.

Its function is as follows. This is one of the proteins that bind and probably mediate the attachment of the 5S RNA into the large ribosomal subunit, where it forms part of the central protuberance. The chain is Large ribosomal subunit protein uL18 from Chlorobium phaeobacteroides (strain DSM 266 / SMG 266 / 2430).